The chain runs to 190 residues: Vacuolar protein sorting-associated protein 29 (190 aa).

It belongs to the VPS29 family. As to quaternary structure, component of the retromer complex which consists of VPS29 (MAG1), VPS26 (VPS26A or VPS26B), VPS35 (VPS35A or VPS35B or VPS35C), VPS5/17 (SNX1 or SNX2A or SNX2B). Component of a retromer subcomplex consisting of VPS29 (MAG1), VPS26 (VPS26A or VPS26B), VPS35 (VPS35A or VPS35B or VPS35C).

It is found in the cytoplasm. Its subcellular location is the endosome membrane. The protein resides in the prevacuolar compartment membrane. It localises to the golgi apparatus. The protein localises to the trans-Golgi network membrane. It is found in the late endosome membrane. Plays a role in vesicular protein sorting. Component of the membrane-associated retromer complex which is essential in endosome-to-Golgi retrograde transport. Required for the auxin-carrier protein PIN2 sorting to the lytic vacuolar pathway and the PIN1 recycling to the plasma membrane, thus influencing auxin transport orientation. Also involved in the efficient sorting of seed storage proteins globulin 12S and albumin 2S. The VPS29-VPS26-VPS35 subcomplex may be involved in recycling of specific cargos from endosome to the plasma membrane. This chain is Vacuolar protein sorting-associated protein 29, found in Arabidopsis thaliana (Mouse-ear cress).